A 706-amino-acid chain; its full sequence is Ribosomal RNA large subunit methyltransferase K/L (706 aa).

A THUMP domain is found at 43-154 (LMYQSLLWSR…RDMASVALDL (112 aa)).

Belongs to the methyltransferase superfamily. RlmKL family.

It localises to the cytoplasm. It catalyses the reaction guanosine(2445) in 23S rRNA + S-adenosyl-L-methionine = N(2)-methylguanosine(2445) in 23S rRNA + S-adenosyl-L-homocysteine + H(+). The catalysed reaction is guanosine(2069) in 23S rRNA + S-adenosyl-L-methionine = N(2)-methylguanosine(2069) in 23S rRNA + S-adenosyl-L-homocysteine + H(+). In terms of biological role, specifically methylates the guanine in position 2445 (m2G2445) and the guanine in position 2069 (m7G2069) of 23S rRNA. In Yersinia enterocolitica serotype O:8 / biotype 1B (strain NCTC 13174 / 8081), this protein is Ribosomal RNA large subunit methyltransferase K/L.